Here is a 235-residue protein sequence, read N- to C-terminus: Phosphoribosylaminoimidazole-succinocarboxamide synthase (235 aa).

The protein belongs to the SAICAR synthetase family.

It catalyses the reaction 5-amino-1-(5-phospho-D-ribosyl)imidazole-4-carboxylate + L-aspartate + ATP = (2S)-2-[5-amino-1-(5-phospho-beta-D-ribosyl)imidazole-4-carboxamido]succinate + ADP + phosphate + 2 H(+). It functions in the pathway purine metabolism; IMP biosynthesis via de novo pathway; 5-amino-1-(5-phospho-D-ribosyl)imidazole-4-carboxamide from 5-amino-1-(5-phospho-D-ribosyl)imidazole-4-carboxylate: step 1/2. The polypeptide is Phosphoribosylaminoimidazole-succinocarboxamide synthase (Streptococcus pneumoniae (strain JJA)).